The chain runs to 303 residues: Uricase (303 aa).

The residue at position 2 (Ala-2) is an N-acetylalanine. Lys-10 and Lys-23 each carry N6-acetyllysine; alternate. Residues Lys-10 and Lys-23 each carry the N6-succinyllysine; alternate modification. Residue Lys-23 is the Charge relay system of the active site. An N6-acetyllysine mark is found at Lys-27 and Lys-36. A phosphoserine mark is found at Ser-39 and Ser-63. Thr-68 functions as the Charge relay system in the catalytic mechanism. Thr-68 and Asp-69 together coordinate urate. N6-acetyllysine occurs at positions 118, 122, and 164. Phe-170 lines the urate pocket. 2 positions are modified to N6-acetyllysine: Lys-175 and Lys-185. Arg-187 provides a ligand contact to urate. At Lys-220 the chain carries N6-acetyllysine; alternate. Lys-220 is modified (N6-succinyllysine; alternate). A Phosphoserine modification is found at Ser-231. Urate is bound by residues Val-234, Gln-235, and Asn-261. The active-site Charge relay system is the His-263. Lys-277 is subject to N6-acetyllysine. At Tyr-288 the chain carries Phosphotyrosine. Residues 301-303 carry the Microbody targeting signal motif; the sequence is SRL.

This sequence belongs to the uricase family. As to expression, expressed in liver. Not detected in other tissues tested.

The protein resides in the peroxisome. It carries out the reaction urate + O2 + H2O = 5-hydroxyisourate + H2O2. It functions in the pathway purine metabolism; urate degradation; (S)-allantoin from urate: step 1/3. Its activity is regulated as follows. Competitively inhibited by xanthine. Catalyzes the oxidation of uric acid to 5-hydroxyisourate, which is further processed to form (S)-allantoin. The chain is Uricase (Uox) from Rattus norvegicus (Rat).